A 443-amino-acid chain; its full sequence is Methyl-coenzyme M reductase I subunit beta (443 aa).

Tyr367 serves as a coordination point for coenzyme M. Gly369 provides a ligand contact to coenzyme B.

Belongs to the methyl-coenzyme M reductase beta subunit family. MCR is a hexamer of two alpha, two beta, and two gamma chains, forming a dimer of heterotrimers. Coenzyme F430 serves as cofactor.

The protein localises to the cytoplasm. The catalysed reaction is coenzyme B + methyl-coenzyme M = methane + coenzyme M-coenzyme B heterodisulfide. It functions in the pathway one-carbon metabolism; methyl-coenzyme M reduction; methane from methyl-coenzyme M: step 1/1. With respect to regulation, methyl-coenzyme M reductase activity is inhibited by 3-nitrooxypropanol (3-NOP) in vitro and in vivo, by oxidation of its active site Ni(I), which stops both growth and methanogenesis. Is also inhibited by the reaction product CoM-S-S-CoB. Component of the methyl-coenzyme M reductase (MCR) I that catalyzes the reductive cleavage of methyl-coenzyme M (CoM-S-CH3 or 2-(methylthio)ethanesulfonate) using coenzyme B (CoB or 7-mercaptoheptanoylthreonine phosphate) as reductant which results in the production of methane and the mixed heterodisulfide of CoB and CoM (CoM-S-S-CoB). This is the final step in methanogenesis. Neither N-6-mercaptohexanoylthreonine phosphate (H-S-HxoTP) nor N-8-mercaptooctanoylthreonine phosphate (H-SOcoTP) nor any other thiol compound such as CoA or CoM can substitute for CoB as the electron donor. This is Methyl-coenzyme M reductase I subunit beta (mcrB) from Methanothermobacter marburgensis (strain ATCC BAA-927 / DSM 2133 / JCM 14651 / NBRC 100331 / OCM 82 / Marburg) (Methanobacterium thermoautotrophicum).